A 332-amino-acid chain; its full sequence is mRNA-decapping enzyme 1 (332 aa).

The segment covering 141–173 (ARAAKAASEAPQASVPAPTQAPAAPAQAPQMAP) has biased composition (low complexity). The interval 141 to 175 (ARAAKAASEAPQASVPAPTQAPAAPAQAPQMAPQA) is disordered.

It belongs to the DCP1 family. In terms of assembly, may be a component of the decapping complex composed of dcap-1 and dcap-2. In terms of tissue distribution, expressed in neurons including touch receptor neurons and motor neurons.

The protein resides in the cytoplasm. The protein localises to the cytoplasmic granule. Its function is as follows. Component of the decapping complex necessary for the degradation of mRNAs, both in normal mRNA turnover and in nonsense-mediated mRNA decay. In contrast to orthologs, does not possess decapping activity and does not remove the 7-methyl guanine cap structure from mRNA molecules. In the nervous system, negatively regulates the expression of insulin-like peptide ins-7, which in turn promotes longevity. This may in part be through promoting the activity of daf-16 in distal tissues. Required for the developmental axon guidance and regrowth of PLM touch receptor neurons. In ADL sensory neurons, plays a role in ciliary shape formation. Acts in neurons to promote larval survival at high temperatures by negatively regulating lin-14 expression. The sequence is that of mRNA-decapping enzyme 1 from Caenorhabditis elegans.